Reading from the N-terminus, the 71-residue chain is ATP synthase F(0) complex subunit e, mitochondrial (71 aa).

Position 34 is an N6-acetyllysine (Lys-34). A Phosphoserine modification is found at Ser-68.

The protein belongs to the ATPase e subunit family. Component of the ATP synthase complex composed at least of ATP5F1A/subunit alpha, ATP5F1B/subunit beta, ATP5MC1/subunit c (homooctomer), MT-ATP6/subunit a, MT-ATP8/subunit 8, ATP5ME/subunit e, ATP5MF/subunit f, ATP5MG/subunit g, ATP5MK/subunit k, ATP5MJ/subunit j, ATP5F1C/subunit gamma, ATP5F1D/subunit delta, ATP5F1E/subunit epsilon, ATP5PF/subunit F6, ATP5PB/subunit b, ATP5PD/subunit d, ATP5PO/subunit OSCP. ATP synthase complex consists of a soluble F(1) head domain (subunits alpha(3) and beta(3)) - the catalytic core - and a membrane F(0) domain - the membrane proton channel (subunits c, a, 8, e, f, g, k and j). These two domains are linked by a central stalk (subunits gamma, delta, and epsilon) rotating inside the F1 region and a stationary peripheral stalk (subunits F6, b, d, and OSCP).

It localises to the mitochondrion. The protein resides in the mitochondrion inner membrane. Its function is as follows. Subunit e, of the mitochondrial membrane ATP synthase complex (F(1)F(0) ATP synthase or Complex V) that produces ATP from ADP in the presence of a proton gradient across the membrane which is generated by electron transport complexes of the respiratory chain. ATP synthase complex consist of a soluble F(1) head domain - the catalytic core - and a membrane F(1) domain - the membrane proton channel. These two domains are linked by a central stalk rotating inside the F(1) region and a stationary peripheral stalk. During catalysis, ATP synthesis in the catalytic domain of F(1) is coupled via a rotary mechanism of the central stalk subunits to proton translocation. In vivo, can only synthesize ATP although its ATP hydrolase activity can be activated artificially in vitro. Part of the complex F(0) domain. The sequence is that of ATP synthase F(0) complex subunit e, mitochondrial from Rattus norvegicus (Rat).